We begin with the raw amino-acid sequence, 46 residues long: Endochitinase 3 (46 aa).

The interval 1–21 (MTPQGNKPSSHDVITGRWTPS) is disordered.

The protein belongs to the glycosyl hydrolase 19 family. Chitinase class I subfamily.

It carries out the reaction Random endo-hydrolysis of N-acetyl-beta-D-glucosaminide (1-&gt;4)-beta-linkages in chitin and chitodextrins.. Defense against chitin-containing fungal and bacterial pathogens. This Arachis hypogaea (Peanut) protein is Endochitinase 3.